We begin with the raw amino-acid sequence, 352 residues long: N-terminal EF-hand calcium-binding protein 1 (352 aa).

A Phosphoserine modification is found at Ser-4. EF-hand domains lie at 26–61 (KGMS…GVLS) and 60–95 (LSGE…HLGE). Residues Asp-39, Asn-41, Asp-43, Lys-45, and Glu-50 each contribute to the Ca(2+) site. Residues 135–163 (LLKETLNQLQSLQNSLECAMETTEEQTRQ) adopt a coiled-coil conformation. The segment at 155–202 (ETTEEQTRQERQGPSKPEVLSIQWPGKRSSRRVQRHNSFSPNSPQFNV) is disordered. The segment covering 190–202 (HNSFSPNSPQFNV) has biased composition (polar residues). 2 positions are modified to phosphoserine: Ser-192 and Ser-197. The stretch at 209–275 (EEDNQWMTQI…EEFQLALKHY (67 aa)) forms a coiled coil. An ABM domain is found at 252-340 (MLVQRQMSVT…LETPELTSTM (89 aa)).

Interacts with STX1. May interact with CPNE6.

Its subcellular location is the cytoplasm. In Rattus norvegicus (Rat), this protein is N-terminal EF-hand calcium-binding protein 1 (Necab1).